A 587-amino-acid chain; its full sequence is F-box/WD repeat-containing protein sel-10 (587 aa).

Basic and acidic residues predominate over residues 1–11; it reads MWPRNDVHMDD. Residues 1–53 form a disordered region; the sequence is MWPRNDVHMDDGSMTPEDQEPVTDNDMEYNDNGEESSYSNGSSSSYNADKLSS. Acidic residues predominate over residues 17–34; the sequence is EDQEPVTDNDMEYNDNGE. Over residues 35–47 the composition is skewed to low complexity; the sequence is ESSYSNGSSSSYN. In terms of domain architecture, F-box spans 121–167; that stretch reads RDFLSCLPVELGMKILHNLTGYDLLKVAQVSKNWKLISEIDKIWKSL. WD repeat units follow at residues 253-291, 294-333, 336-373, 376-415, 416-455, 461-498, and 501-539; these read GHED…VMYT, GHTG…LLHT, GHTS…HLAT, GHHA…RTLT, GHNN…GQEC, GHTS…CVHM, and GHRS…LIRD.

As to quaternary structure, probable component of the SCF(sel-10) E3 ubiquitin-protein ligase complex which includes skr-1 and F-box domain-containing protein sel-10 as a substrate recognition component. Interacts with fem-1, fem-2, and fem-3. Interacts with the intracellular domain of glp-1 and sel-12. Interacts with lin-12. Interacts with skr-1. Interacts with zyg-1. Expressed in tail and head neurons.

The protein resides in the cell projection. It is found in the axon. Its subcellular location is the cytoplasm. Its function is as follows. Probable substrate recognition component of SCF (SKP1-CUL-F-box protein) E3 ubiquitin-protein ligase complex, which mediates the ubiquitination and subsequent proteasomal degradation of target proteins. Regulates synapse elimination in early development in the motor neuron HSNL. Cell autonomous negative regulator of lin-12/Notch-mediated signaling, with respect to lin-12 activity in cell fate decisions and tumorigenesis. May target the intracellular domains of lin-12/Notch proteins for ubiquitin-dependent degradation. Involved in sex determination by promoting female development. Potential regulator of presenilin. May have a role in egg laying. Regulates zyg-1 levels (possibly redundantly with lin-23) to control centrosome duplication during mitosis. Negatively regulates lin-45 activity and protein stability, probably by targeting it for ubiquitination and proteasomal degradation. The sequence is that of F-box/WD repeat-containing protein sel-10 from Caenorhabditis elegans.